We begin with the raw amino-acid sequence, 248 residues long: Triosephosphate isomerase (248 aa).

9–11 provides a ligand contact to substrate; sequence NWK. The active-site Electrophile is the histidine 94. Glutamate 164 acts as the Proton acceptor in catalysis. Residues glycine 170, serine 209, and 230 to 231 each bind substrate; that span reads GG.

This sequence belongs to the triosephosphate isomerase family. In terms of assembly, homodimer.

It localises to the cytoplasm. It carries out the reaction D-glyceraldehyde 3-phosphate = dihydroxyacetone phosphate. The protein operates within carbohydrate biosynthesis; gluconeogenesis. Its pathway is carbohydrate degradation; glycolysis; D-glyceraldehyde 3-phosphate from glycerone phosphate: step 1/1. Functionally, involved in the gluconeogenesis. Catalyzes stereospecifically the conversion of dihydroxyacetone phosphate (DHAP) to D-glyceraldehyde-3-phosphate (G3P). The protein is Triosephosphate isomerase of Hahella chejuensis (strain KCTC 2396).